The primary structure comprises 80 residues: Type VII secretion system accessory factor EsaB (80 aa).

It belongs to the EsaB family.

It is found in the cytoplasm. Its function is as follows. Seems to regulate secreted factors that contribute to the establishment of persistent infections in the host. In Staphylococcus aureus (strain COL), this protein is Type VII secretion system accessory factor EsaB.